A 785-amino-acid polypeptide reads, in one-letter code: Cadherin-7 (785 aa).

The first 27 residues, 1 to 27 (MKLGKVELCRFLQLIALFLCFSGMNQA), serve as a signal peptide directing secretion. A propeptide spanning residues 28–47 (ELPRSRSKPYFQLGRSRTKR) is cleaved from the precursor. The Extracellular segment spans residues 28–607 (ELPRSRSKPY…AYILPAGLST (580 aa)). Cadherin domains follow at residues 49–153 (WVWN…EPKF), 154–262 (LDGP…PPRF), 263–377 (PRRS…PPVF), 378–482 (SSPL…APEF), and 482–599 (FAMD…AEAY). 2 N-linked (GlcNAc...) asparagine glycosylation sites follow: Asn449 and Asn530. A helical membrane pass occupies residues 608–628 (GALIAILACVLTLLVLILLIV). At 629–785 (TMKRRKKEPL…YGNGQESLYS (157 aa)) the chain is on the cytoplasmic side.

It localises to the cell membrane. Functionally, cadherins are calcium-dependent cell adhesion proteins. They preferentially interact with themselves in a homophilic manner in connecting cells; cadherins may thus contribute to the sorting of heterogeneous cell types. The protein is Cadherin-7 (Cdh7) of Rattus norvegicus (Rat).